The sequence spans 411 residues: 2,3-bisphosphoglycerate-independent phosphoglycerate mutase (411 aa).

This sequence belongs to the BPG-independent phosphoglycerate mutase family. A-PGAM subfamily.

The enzyme catalyses (2R)-2-phosphoglycerate = (2R)-3-phosphoglycerate. It functions in the pathway carbohydrate degradation; glycolysis; pyruvate from D-glyceraldehyde 3-phosphate: step 3/5. Its function is as follows. Catalyzes the interconversion of 2-phosphoglycerate and 3-phosphoglycerate. This chain is 2,3-bisphosphoglycerate-independent phosphoglycerate mutase, found in Thermococcus kodakarensis (strain ATCC BAA-918 / JCM 12380 / KOD1) (Pyrococcus kodakaraensis (strain KOD1)).